The sequence spans 619 residues: Leucine aminopeptidase 2 (619 aa).

Residues 141–143 and 273–278 contribute to the a peptide site; these read QCQ and PYGGME. Histidine 302 contributes to the Zn(2+) binding site. The active-site Proton acceptor is glutamate 303. 2 residues coordinate Zn(2+): histidine 306 and glutamate 325. Tyrosine 390 acts as the Proton donor in catalysis.

The protein belongs to the peptidase M1 family. The cofactor is Zn(2+).

Its subcellular location is the cytoplasm. It localises to the nucleus. It carries out the reaction an epoxide + H2O = an ethanediol. In terms of biological role, aminopeptidase that preferentially cleaves di- and tripeptides. Also has low epoxide hydrolase activity (in vitro). Can hydrolyze the epoxide leukotriene LTA(4) but it forms preferentially 5,6-dihydroxy-7,9,11,14-eicosatetraenoic acid rather than the cytokine leukotriene B(4) as the product compared to the homologous mammalian enzyme (in vitro). The sequence is that of Leucine aminopeptidase 2 from Coccidioides immitis (strain RS) (Valley fever fungus).